Consider the following 861-residue polypeptide: Leucine--tRNA ligase (861 aa).

The 'HIGH' region signature appears at 42 to 52; the sequence is PYPSGRLHMGH. The 'KMSKS' region motif lies at 619 to 623; it reads KMSKS. Lys622 is a binding site for ATP.

The protein belongs to the class-I aminoacyl-tRNA synthetase family.

It localises to the cytoplasm. The catalysed reaction is tRNA(Leu) + L-leucine + ATP = L-leucyl-tRNA(Leu) + AMP + diphosphate. This is Leucine--tRNA ligase from Haemophilus influenzae (strain 86-028NP).